Here is a 238-residue protein sequence, read N- to C-terminus: NADH-quinone oxidoreductase subunit C (238 aa).

The disordered stretch occupies residues 1–20; the sequence is MSSPDQNPSDAAGQTGSSNE.

This sequence belongs to the complex I 30 kDa subunit family. In terms of assembly, NDH-1 is composed of 14 different subunits. Subunits NuoB, C, D, E, F, and G constitute the peripheral sector of the complex.

The protein localises to the cell membrane. The enzyme catalyses a quinone + NADH + 5 H(+)(in) = a quinol + NAD(+) + 4 H(+)(out). In terms of biological role, NDH-1 shuttles electrons from NADH, via FMN and iron-sulfur (Fe-S) centers, to quinones in the respiratory chain. The immediate electron acceptor for the enzyme in this species is believed to be a menaquinone. Couples the redox reaction to proton translocation (for every two electrons transferred, four hydrogen ions are translocated across the cytoplasmic membrane), and thus conserves the redox energy in a proton gradient. This is NADH-quinone oxidoreductase subunit C from Mycobacterium ulcerans (strain Agy99).